The sequence spans 245 residues: Biosynthetic peptidoglycan transglycosylase (245 aa).

The helical transmembrane segment at 20–42 (VYAGSVFAGAWLATQLFYLAQIA) threads the bilayer.

The protein belongs to the glycosyltransferase 51 family.

The protein resides in the cell inner membrane. The enzyme catalyses [GlcNAc-(1-&gt;4)-Mur2Ac(oyl-L-Ala-gamma-D-Glu-L-Lys-D-Ala-D-Ala)](n)-di-trans,octa-cis-undecaprenyl diphosphate + beta-D-GlcNAc-(1-&gt;4)-Mur2Ac(oyl-L-Ala-gamma-D-Glu-L-Lys-D-Ala-D-Ala)-di-trans,octa-cis-undecaprenyl diphosphate = [GlcNAc-(1-&gt;4)-Mur2Ac(oyl-L-Ala-gamma-D-Glu-L-Lys-D-Ala-D-Ala)](n+1)-di-trans,octa-cis-undecaprenyl diphosphate + di-trans,octa-cis-undecaprenyl diphosphate + H(+). The protein operates within cell wall biogenesis; peptidoglycan biosynthesis. Peptidoglycan polymerase that catalyzes glycan chain elongation from lipid-linked precursors. The polypeptide is Biosynthetic peptidoglycan transglycosylase (Burkholderia lata (strain ATCC 17760 / DSM 23089 / LMG 22485 / NCIMB 9086 / R18194 / 383)).